The sequence spans 336 residues: Holliday junction branch migration complex subunit RuvB (336 aa).

A large ATPase domain (RuvB-L) region spans residues 4–184; it reads SDRLISSQSI…FGIVQRLEYY (181 aa). Residues Ile-23, Arg-24, Gly-65, Lys-68, Thr-69, Thr-70, 131–133, Arg-174, Tyr-184, and Arg-221 each bind ATP; that span reads EDY. Residue Thr-69 coordinates Mg(2+). The small ATPAse domain (RuvB-S) stretch occupies residues 185–255; sequence SVDSLTQIVA…MAQQALEMLE (71 aa). The interval 258–336 is head domain (RuvB-H); it reads QHGFDLMDRK…HFGFSAIEQE (79 aa). DNA-binding residues include Arg-313 and Arg-318.

The protein belongs to the RuvB family. As to quaternary structure, homohexamer. Forms an RuvA(8)-RuvB(12)-Holliday junction (HJ) complex. HJ DNA is sandwiched between 2 RuvA tetramers; dsDNA enters through RuvA and exits via RuvB. An RuvB hexamer assembles on each DNA strand where it exits the tetramer. Each RuvB hexamer is contacted by two RuvA subunits (via domain III) on 2 adjacent RuvB subunits; this complex drives branch migration. In the full resolvosome a probable DNA-RuvA(4)-RuvB(12)-RuvC(2) complex forms which resolves the HJ.

The protein localises to the cytoplasm. The enzyme catalyses ATP + H2O = ADP + phosphate + H(+). In terms of biological role, the RuvA-RuvB-RuvC complex processes Holliday junction (HJ) DNA during genetic recombination and DNA repair, while the RuvA-RuvB complex plays an important role in the rescue of blocked DNA replication forks via replication fork reversal (RFR). RuvA specifically binds to HJ cruciform DNA, conferring on it an open structure. The RuvB hexamer acts as an ATP-dependent pump, pulling dsDNA into and through the RuvAB complex. RuvB forms 2 homohexamers on either side of HJ DNA bound by 1 or 2 RuvA tetramers; 4 subunits per hexamer contact DNA at a time. Coordinated motions by a converter formed by DNA-disengaged RuvB subunits stimulates ATP hydrolysis and nucleotide exchange. Immobilization of the converter enables RuvB to convert the ATP-contained energy into a lever motion, pulling 2 nucleotides of DNA out of the RuvA tetramer per ATP hydrolyzed, thus driving DNA branch migration. The RuvB motors rotate together with the DNA substrate, which together with the progressing nucleotide cycle form the mechanistic basis for DNA recombination by continuous HJ branch migration. Branch migration allows RuvC to scan DNA until it finds its consensus sequence, where it cleaves and resolves cruciform DNA. In Legionella pneumophila (strain Lens), this protein is Holliday junction branch migration complex subunit RuvB.